The chain runs to 778 residues: Ent-sandaracopimaradiene synthase KSL3, chloroplastic (778 aa).

Residues 1-35 (MLLTSTNTLKISSQRKEWEAKDLTGMFHGQVNGRV) constitute a chloroplast transit peptide. Mg(2+) is bound by residues Asp527, Glu531, Asn670, Asp671, and Asp678. Positions 527-531 (DDFFE) match the DDXXD motif motif.

The protein belongs to the terpene synthase family. Mg(2+) serves as cofactor.

The protein localises to the plastid. It localises to the chloroplast. It catalyses the reaction ent-copalyl diphosphate = ent-sandaracopimara-8(14),15-diene + diphosphate. It carries out the reaction ent-copalyl diphosphate = ent-(12E)-labda-8(17),12,14-triene + diphosphate. Its pathway is secondary metabolite biosynthesis; terpenoid biosynthesis. In terms of biological role, diterpene cyclase involved in the biosynthesis of labdane-related diterpenoids (LRDs) natural products. Catalyzes the cyclization of ent-CDP into ent-sandaracopimaradiene as a major, and ent-pimaradiene and ent-labdatriene as minor products. This Ricinus communis (Castor bean) protein is Ent-sandaracopimaradiene synthase KSL3, chloroplastic.